A 258-amino-acid polypeptide reads, in one-letter code: tRNA pseudouridine synthase A (258 aa).

The active-site Nucleophile is Asp-52. Tyr-110 lines the substrate pocket.

Belongs to the tRNA pseudouridine synthase TruA family. In terms of assembly, homodimer.

It carries out the reaction uridine(38/39/40) in tRNA = pseudouridine(38/39/40) in tRNA. Functionally, formation of pseudouridine at positions 38, 39 and 40 in the anticodon stem and loop of transfer RNAs. In Francisella tularensis subsp. novicida (strain U112), this protein is tRNA pseudouridine synthase A.